We begin with the raw amino-acid sequence, 339 residues long: Dihydroorotate dehydrogenase (quinone) (339 aa).

FMN is bound by residues A62–K66 and T86. A substrate-binding site is contributed by K66. Residue N111 to F115 participates in substrate binding. N139 and N172 together coordinate FMN. N172 provides a ligand contact to substrate. S175 serves as the catalytic Nucleophile. N177 is a substrate binding site. The FMN site is built by K217 and T245. Substrate is bound at residue N246–T247. FMN contacts are provided by residues G268, G297, and Y318–S319.

Belongs to the dihydroorotate dehydrogenase family. Type 2 subfamily. In terms of assembly, monomer. FMN serves as cofactor.

It localises to the cell membrane. It carries out the reaction (S)-dihydroorotate + a quinone = orotate + a quinol. It participates in pyrimidine metabolism; UMP biosynthesis via de novo pathway; orotate from (S)-dihydroorotate (quinone route): step 1/1. Its function is as follows. Catalyzes the conversion of dihydroorotate to orotate with quinone as electron acceptor. The polypeptide is Dihydroorotate dehydrogenase (quinone) (Shewanella amazonensis (strain ATCC BAA-1098 / SB2B)).